The chain runs to 514 residues: Ribonuclease Y (514 aa).

The chain crosses the membrane as a helical span at residues 2–22; the sequence is EDLIVAIVVGAFSSAISIFVV. Residues 204-268 enclose the KH domain; that stretch reads LINNIPLNDE…VATKTIRELL (65 aa). In terms of domain architecture, HD spans 330-423; sequence ALAHTLEVAH…VCAADALSAA (94 aa).

The protein belongs to the RNase Y family.

The protein resides in the cell membrane. Its function is as follows. Endoribonuclease that initiates mRNA decay. In Aliarcobacter butzleri (strain RM4018) (Arcobacter butzleri), this protein is Ribonuclease Y.